Consider the following 1691-residue polypeptide: ADAMTS-like protein 3 (1691 aa).

Residues 1 to 26 form the signal peptide; the sequence is MASWTSPWWVLIGMVFMHSPLPQTTA. The TSP type-1 1 domain maps to 75 to 124; that stretch reads DGNWDAWGDWSDCSRTCGGGASYSLRRCLTGRNCEGQNIRYKTCSNHDCP. 3 disulfides stabilise this stretch: Cys87–Cys118, Cys91–Cys123, and Cys102–Cys108. Asn293 carries N-linked (GlcNAc...) asparagine glycosylation. TSP type-1 domains lie at 418-468, 478-535, and 564-626; these read PLPR…APKP, DCPK…IPCY, and EEPT…EACD. Cystine bridges form between Cys576-Cys620, Cys580-Cys625, and Cys591-Cys609. Asn681 carries an N-linked (GlcNAc...) asparagine glycan. 3 TSP type-1 domains span residues 703-760, 763-818, and 819-881; these read CPPR…FDCP, WHIE…ARTD, and CPPH…PECS. A glycan (N-linked (GlcNAc...) asparagine) is linked at Asn797. Intrachain disulfides connect Cys831/Cys875, Cys835/Cys880, and Cys846/Cys863. In terms of domain architecture, Ig-like C2-type 1 spans 896–992; the sequence is PQILSVQRVY…IAGSAQETVV (97 aa). N-linked (GlcNAc...) asparagine glycosylation is found at Asn915 and Asn927. Cys934 and Cys982 form a disulfide bridge. Asn1102 is a glycosylation site (N-linked (GlcNAc...) asparagine). Residues 1146 to 1184 form a disordered region; that stretch reads PPAAQLRGETGSVSQSSHAKNSGKLTFKPKGPVLMRQSQ. A compositionally biased stretch (polar residues) spans 1156–1169; it reads GSVSQSSHAKNSGK. The 95-residue stretch at 1185 to 1279 folds into the Ig-like C2-type 2 domain; sequence PPSISFNKTI…GSDVESSSVL (95 aa). Asn1191 carries an N-linked (GlcNAc...) asparagine glycan. An intrachain disulfide couples Cys1215 to Cys1263. N-linked (GlcNAc...) asparagine glycans are attached at residues Asn1292, Asn1316, Asn1330, Asn1343, Asn1349, Asn1356, Asn1432, Asn1516, Asn1574, and Asn1591. In terms of domain architecture, Ig-like C2-type 3 spans 1296-1378; the sequence is PEHNHLSVVV…ATNALGKAVA (83 aa). An intrachain disulfide couples Cys1321 to Cys1367. TSP type-1 domains follow at residues 1424-1482 and 1483-1545; these read QEPF…NIRD and CPAR…HPCV. One can recognise a TSP type-1 10 domain in the interval 1597–1644; that stretch reads CDVCWHTGPWKPCTAACGRGFQSRKVDCIHTRSCKPVAKRHCVQKKKP. Residues 1655 to 1691 enclose the PLAC domain; it reads CDRDCTDTTHYCMFVKHLNLCSLDRYKQRCCQSCQEG.

Post-translationally, glycosylated. Can be O-fucosylated by POFUT2 on a serine or a threonine residue found within the consensus sequence C1-X(2)-(S/T)-C2-G of the TSP type-1 repeat domains where C1 and C2 are the first and second cysteine residue of the repeat, respectively. Fucosylated repeats can then be further glycosylated by the addition of a beta-1,3-glucose residue by the glucosyltransferase, B3GALTL. Fucosylation mediates the efficient secretion of ADAMTS family members. Can also be C-glycosylated with one or two mannose molecules on tryptophan residues within the consensus sequence W-X-X-W of the TPRs, and N-glycosylated. These other glycosylations can also facilitate secretion. Expressed in epithelial cells of the colon, fallopian tube, skin, breast, prostate, epididymis, liver, pancreatic islets and bile ducts, as well as by vascular endothelial cells, smooth muscle cells, fibroblasts, cortical and ganglionic neurons and cardiac myocytes. Also expressed by malignant epithelial cells in colon cancer, as well as breast, prostate, renal and skin tumors. Expression is significantly reduced in colon cancer compared to normal colon.

It localises to the secreted. It is found in the extracellular space. The protein localises to the extracellular matrix. The chain is ADAMTS-like protein 3 (ADAMTSL3) from Homo sapiens (Human).